The sequence spans 260 residues: MKQDQLLEYLEHFTSVTDGDRLAELIGRFTLGMGYDYYRFALIIPMSMQRPKVVLFNQCPDSWVQAYTANHMLACDPIIQLARKQTLPIYWNRLDERARFLQEGSLDVMGLAAEFGLRNGISFPLHGAAGENGILSFITAERASSDLLLESSPILSWMSNYIFEAAIRIVRVSLREDDPQEALTDRETECLFWASEGKTSGEIACILGITERTVNYHLNQVTRKTGSMNRYQAIAKGVSSGILLPNLEQVVVTNFPKLMQ.

One can recognise an HTH luxR-type domain in the interval 176–241 (EDDPQEALTD…QAIAKGVSSG (66 aa)). The H-T-H motif DNA-binding region spans 200 to 219 (SGEIACILGITERTVNYHLN).

This sequence belongs to the autoinducer-regulated transcriptional regulatory protein family.

Functions as a BHL-responsive transcriptional regulator. The sequence is that of Transcriptional activator protein AsaR from Aeromonas salmonicida.